Reading from the N-terminus, the 418-residue chain is Histidine--tRNA ligase (418 aa).

Belongs to the class-II aminoacyl-tRNA synthetase family.

Its subcellular location is the cytoplasm. The catalysed reaction is tRNA(His) + L-histidine + ATP = L-histidyl-tRNA(His) + AMP + diphosphate + H(+). The chain is Histidine--tRNA ligase from Methanococcus maripaludis (strain C6 / ATCC BAA-1332).